Consider the following 261-residue polypeptide: tRNA pseudouridine synthase A (261 aa).

The active-site Nucleophile is the Asp51. Tyr109 serves as a coordination point for substrate.

The protein belongs to the tRNA pseudouridine synthase TruA family. As to quaternary structure, homodimer.

It catalyses the reaction uridine(38/39/40) in tRNA = pseudouridine(38/39/40) in tRNA. In terms of biological role, formation of pseudouridine at positions 38, 39 and 40 in the anticodon stem and loop of transfer RNAs. This Haemophilus ducreyi (strain 35000HP / ATCC 700724) protein is tRNA pseudouridine synthase A.